We begin with the raw amino-acid sequence, 234 residues long: Leucyl/phenylalanyl-tRNA--protein transferase (234 aa).

Belongs to the L/F-transferase family.

Its subcellular location is the cytoplasm. The enzyme catalyses N-terminal L-lysyl-[protein] + L-leucyl-tRNA(Leu) = N-terminal L-leucyl-L-lysyl-[protein] + tRNA(Leu) + H(+). The catalysed reaction is N-terminal L-arginyl-[protein] + L-leucyl-tRNA(Leu) = N-terminal L-leucyl-L-arginyl-[protein] + tRNA(Leu) + H(+). It catalyses the reaction L-phenylalanyl-tRNA(Phe) + an N-terminal L-alpha-aminoacyl-[protein] = an N-terminal L-phenylalanyl-L-alpha-aminoacyl-[protein] + tRNA(Phe). Functions in the N-end rule pathway of protein degradation where it conjugates Leu, Phe and, less efficiently, Met from aminoacyl-tRNAs to the N-termini of proteins containing an N-terminal arginine or lysine. The polypeptide is Leucyl/phenylalanyl-tRNA--protein transferase (Tolumonas auensis (strain DSM 9187 / NBRC 110442 / TA 4)).